Consider the following 126-residue polypeptide: Alpha-lactalbumin (126 aa).

The C-type lysozyme domain occupies 1 to 126 (RIFQICELSR…CNSDLDQWKC (126 aa)). Intrachain disulfides connect C6–C126, C30–C117, C63–C82, and C78–C96. A glycan (N-linked (GlcNAc...) asparagine) is linked at N47. Residues K84, D87, D89, D92, and D93 each coordinate Ca(2+).

Belongs to the glycosyl hydrolase 22 family. In terms of assembly, lactose synthase (LS) is a heterodimer of a catalytic component, beta1,4-galactosyltransferase (beta4Gal-T1) and a regulatory component, alpha-lactalbumin (LA). As to expression, mammary gland specific. Secreted in milk.

Its subcellular location is the secreted. In terms of biological role, regulatory subunit of lactose synthase, changes the substrate specificity of galactosyltransferase in the mammary gland making glucose a good acceptor substrate for this enzyme. This enables LS to synthesize lactose, the major carbohydrate component of milk. In other tissues, galactosyltransferase transfers galactose onto the N-acetylglucosamine of the oligosaccharide chains in glycoproteins. This Ornithorhynchus anatinus (Duckbill platypus) protein is Alpha-lactalbumin (LALBA).